Reading from the N-terminus, the 479-residue chain is GTPase Obg (479 aa).

One can recognise an Obg domain in the interval 2–159; the sequence is PRFVDRVVIH…RDLTLELKTV (158 aa). In terms of domain architecture, OBG-type G spans 160 to 340; that stretch reads ADVGLVGFPS…LIFGLWQMVS (181 aa). Residues 166-173, 191-195, 212-215, 292-295, and 321-323 each bind GTP; these read GFPSAGKS, FTTLV, DVPG, NKID, and STV. Positions 173 and 193 each coordinate Mg(2+). Residues 358–436 enclose the OCT domain; it reads PVPVDDSGFD…IGEMTFDWEP (79 aa). Residues 438 to 479 form a disordered region; sequence TPAGGHVAMSGRGTDVRLERSDRVGAAERKAARRQRRERDDD. The span at 451-467 shows a compositional bias: basic and acidic residues; sequence TDVRLERSDRVGAAERK.

This sequence belongs to the TRAFAC class OBG-HflX-like GTPase superfamily. OBG GTPase family. In terms of assembly, monomer. Requires Mg(2+) as cofactor.

It localises to the cytoplasm. Its function is as follows. An essential GTPase which binds GTP, GDP and possibly (p)ppGpp with moderate affinity, with high nucleotide exchange rates and a fairly low GTP hydrolysis rate. Plays a role in control of the cell cycle, stress response, ribosome biogenesis and in those bacteria that undergo differentiation, in morphogenesis control. The chain is GTPase Obg from Mycobacterium marinum (strain ATCC BAA-535 / M).